The sequence spans 581 residues: Arginine--tRNA ligase (581 aa).

A 'HIGH' region motif is present at residues 126–136; sequence PNLAKEMHVGH.

It belongs to the class-I aminoacyl-tRNA synthetase family. As to quaternary structure, monomer.

Its subcellular location is the cytoplasm. The enzyme catalyses tRNA(Arg) + L-arginine + ATP = L-arginyl-tRNA(Arg) + AMP + diphosphate. This is Arginine--tRNA ligase from Shewanella woodyi (strain ATCC 51908 / MS32).